A 149-amino-acid polypeptide reads, in one-letter code: Large ribosomal subunit protein bL9 (149 aa).

The protein belongs to the bacterial ribosomal protein bL9 family.

Functionally, binds to the 23S rRNA. The polypeptide is Large ribosomal subunit protein bL9 (Synechococcus sp. (strain JA-2-3B'a(2-13)) (Cyanobacteria bacterium Yellowstone B-Prime)).